Consider the following 340-residue polypeptide: Sideroflexin-5 (340 aa).

Helical transmembrane passes span 103–123, 163–183, 254–274, and 287–307; these read IFMP…VVGL, FIQG…GLNV, LTRV…MSML, and LLPV…PLAI.

It belongs to the sideroflexin family. In terms of tissue distribution, primarily expressed in the brain.

It is found in the mitochondrion inner membrane. The catalysed reaction is citrate(in) = citrate(out). In terms of biological role, mitochondrial amino-acid transporter. Transports citrate. Does not act as a serine transporter: not able to mediate transport of serine into mitochondria. In brown adipose tissue, plays a role in the regulation of UCP1-dependent thermogenesis probably by supporting mitochondrial glycerol-3-phosphate utilization. This chain is Sideroflexin-5, found in Homo sapiens (Human).